We begin with the raw amino-acid sequence, 547 residues long: Glucocorticoid-induced transcript 1 protein (547 aa).

Over residues 1–13 (MSTASSSSSSSSS) the composition is skewed to low complexity. Disordered regions lie at residues 1-55 (MSTA…APAA) and 72-285 (LLRG…LSNI). Residue S20 is modified to Phosphoserine. Residues 26–38 (SAAGSPPAVAAAG) are compositionally biased toward low complexity. Gly residues predominate over residues 39–50 (SGNGAGGGGGVG). S79, S105, S107, and S108 each carry phosphoserine. A compositionally biased stretch (low complexity) spans 86–105 (AAAAASLGSLPGPGAARGPS). The residue at position 110 (T110) is a Phosphothreonine. Over residues 130–145 (RSPESHRRSSSPERRS) the composition is skewed to basic and acidic residues. Low complexity predominate over residues 162-177 (RTSSTIRRTSSLDTIT). Phosphoserine occurs at positions 171 and 172. 2 positions are modified to phosphothreonine: T175 and T177. Residues 187–201 (RDPHVHYPSCMKDKA) are compositionally biased toward basic and acidic residues. S223 carries the post-translational modification Phosphoserine. Residues 225–254 (GSADQLKEQIAKLRQQLQRSKQSSRHSKEK) adopt a coiled-coil conformation. The segment covering 236–245 (KLRQQLQRSK) has biased composition (low complexity). S258 bears the Phosphoserine mark. Residues 265 to 276 (ITISHTQATGSR) show a composition bias toward polar residues. T266 carries the post-translational modification Phosphothreonine. Phosphoserine is present on S303. The span at 319–331 (EVSKPLDIPDGRR) shows a compositional bias: basic and acidic residues. A disordered region spans residues 319-417 (EVSKPLDIPD…KPNNSYMFKR (99 aa)). The span at 339–356 (RSSSTRSIDTQTPSVQER) shows a compositional bias: polar residues. A Phosphothreonine modification is found at T343. A Phosphoserine modification is found at S345. T350 carries the post-translational modification Phosphothreonine. The segment covering 357-369 (SSSCSSHSPCVSP) has biased composition (low complexity). Phosphoserine is present on residues S394, S398, S406, S412, and S480. Polar residues predominate over residues 505–520 (SLSDDTSTAGSMEASV). Positions 505–530 (SLSDDTSTAGSMEASVQQPSQQQQLL) are disordered. Over residues 521 to 530 (QQPSQQQQLL) the composition is skewed to low complexity.

Predominantly expressed in lung, spleen, thymus and testis and, at lower levels, in brain, bone marrow, peripheral leukocytes, skin and trachea.

The protein is Glucocorticoid-induced transcript 1 protein (GLCCI1) of Homo sapiens (Human).